We begin with the raw amino-acid sequence, 697 residues long: Potassium-transporting ATPase ATP-binding subunit (697 aa).

4 consecutive transmembrane segments (helical) span residues 55-75 (PIMF…FLPS), 79-99 (SIPG…VLFA), 245-265 (LTLI…YLGF), and 271-291 (VLVA…LSAI). Asp-324 functions as the 4-aspartylphosphate intermediate in the catalytic mechanism. ATP contacts are provided by residues Asp-361, Glu-365, 393–400 (FKAETRMS), and Lys-412. Mg(2+) is bound by residues Asp-535 and Asp-539. 3 consecutive transmembrane segments (helical) span residues 605-625 (FAII…LNIM), 633-653 (AILS…PLAM), and 677-697 (GGVI…GLFI).

The protein belongs to the cation transport ATPase (P-type) (TC 3.A.3) family. Type IA subfamily. As to quaternary structure, the system is composed of three essential subunits: KdpA, KdpB and KdpC.

It is found in the cell membrane. It catalyses the reaction K(+)(out) + ATP + H2O = K(+)(in) + ADP + phosphate + H(+). Functionally, part of the high-affinity ATP-driven potassium transport (or Kdp) system, which catalyzes the hydrolysis of ATP coupled with the electrogenic transport of potassium into the cytoplasm. This subunit is responsible for energy coupling to the transport system and for the release of the potassium ions to the cytoplasm. The sequence is that of Potassium-transporting ATPase ATP-binding subunit from Bacillus cereus (strain G9842).